The chain runs to 1198 residues: Spindle-defective protein 5 (1198 aa).

Positions 1-10 (MEDNSVLNED) are enriched in polar residues. Residues 1–45 (MEDNSVLNEDSNLEHVEGQPRRSMSQPVLNVEGDKRTSSTSATQQ) are disordered. Coiled coils occupy residues 67–381 (EENK…QLTG), 566–603 (HDVA…FEEI), 694–916 (KFTS…LSTS), 983–1035 (DELC…ENVP), and 1127–1175 (KNET…EFQD).

Its subcellular location is the cytoplasm. The protein resides in the cytoskeleton. The protein localises to the microtubule organizing center. It is found in the centrosome. Plays a central role in centrosome maturation and mitotic spindle assembly during the first division of the zygote. Required for the centrosomal localization of air-1 and zyg-9. Probably not required in late embryogenesis and during larval development. This is Spindle-defective protein 5 (spd-5) from Caenorhabditis elegans.